The following is a 66-amino-acid chain: Large ribosomal subunit protein uL29 (66 aa).

Belongs to the universal ribosomal protein uL29 family.

The protein is Large ribosomal subunit protein uL29 of Kosmotoga olearia (strain ATCC BAA-1733 / DSM 21960 / TBF 19.5.1).